A 320-amino-acid chain; its full sequence is Malate dehydrogenase (320 aa).

Residues 10–15 (GSGMIG) and D34 contribute to the NAD(+) site. Positions 83 and 89 each coordinate substrate. NAD(+) contacts are provided by residues N96 and 119 to 121 (ITN). Substrate is bound by residues N121 and R152. H176 acts as the Proton acceptor in catalysis.

The protein belongs to the LDH/MDH superfamily. MDH type 3 family.

It carries out the reaction (S)-malate + NAD(+) = oxaloacetate + NADH + H(+). Its function is as follows. Catalyzes the reversible oxidation of malate to oxaloacetate. This Hyphomonas neptunium (strain ATCC 15444) protein is Malate dehydrogenase.